The following is a 926-amino-acid chain: Alpha-aminoadipic semialdehyde synthase, mitochondrial (926 aa).

Residues 1–27 (MLRAQRPRLARLRACLSRGLHHKPVMA) constitute a mitochondrion transit peptide. The tract at residues 28–455 (LRREDVNAWE…DAVITSNGLL (428 aa)) is lysine-ketoglutarate reductase. Lys48, Lys52, and Lys56 each carry N6-acetyllysine. Lys93 is modified (N6-acetyllysine; alternate). Lys93 carries the N6-succinyllysine; alternate modification. The residue at position 128 (Lys128) is an N6-acetyllysine. Lys138 is subject to N6-acetyllysine; alternate. An N6-succinyllysine; alternate modification is found at Lys138. Lys274 is modified (N6-succinyllysine). An N6-acetyllysine; alternate modification is found at Lys286. Lys286 is subject to N6-succinyllysine; alternate. Lys333 is modified (N6-succinyllysine). Residue Lys458 is modified to N6-acetyllysine; alternate. Lys458 is subject to N6-succinyllysine; alternate. The saccharopine dehydrogenase stretch occupies residues 477 to 926 (MSTKKKVLVL…VFNTQSTIKL (450 aa)). NAD(+)-binding residues include Ser488, Asp512, and Gln516. Residues Lys523 and Lys535 each carry the N6-acetyllysine; alternate modification. N6-succinyllysine; alternate occurs at positions 523 and 535. NAD(+) is bound by residues Leu554, Ala576, and Ser577. L-saccharopine is bound at residue 577 to 578 (SY). Lys584 carries the post-translational modification N6-acetyllysine; alternate. Lys584 is subject to N6-succinyllysine; alternate. Residues Leu603, Asp604, and Pro605 each coordinate NAD(+). Asp604 contributes to the L-saccharopine binding site. Arg703 contributes to the L-saccharopine binding site. The residue at position 707 (Lys707) is an N6-acetyllysine. Position 724 to 726 (724 to 726 (TLR)) interacts with L-saccharopine. Lys732 is modified (N6-succinyllysine). An N6-acetyllysine modification is found at Lys739. Lys761 carries the post-translational modification N6-acetyllysine; alternate. An N6-succinyllysine; alternate modification is found at Lys761. Lys778 and Lys780 each carry N6-acetyllysine.

In the N-terminal section; belongs to the AlaDH/PNT family. The protein in the C-terminal section; belongs to the saccharopine dehydrogenase family. As to quaternary structure, homotetramer. Highly expressed in kidney and liver, very low expression is seen in heart, brain, spleen, lung, skeletal muscle and testis.

The protein resides in the mitochondrion. It catalyses the reaction L-saccharopine + NADP(+) + H2O = L-lysine + 2-oxoglutarate + NADPH + H(+). It carries out the reaction L-saccharopine + NAD(+) + H2O = (S)-2-amino-6-oxohexanoate + L-glutamate + NADH + H(+). It functions in the pathway amino-acid degradation; L-lysine degradation via saccharopine pathway; glutaryl-CoA from L-lysine: step 1/6. Its pathway is amino-acid degradation; L-lysine degradation via saccharopine pathway; glutaryl-CoA from L-lysine: step 2/6. Its function is as follows. Bifunctional enzyme that catalyzes the first two steps in lysine degradation. This is Alpha-aminoadipic semialdehyde synthase, mitochondrial from Mus musculus (Mouse).